A 341-amino-acid polypeptide reads, in one-letter code: Inositol 2-dehydrogenase (341 aa).

It belongs to the Gfo/Idh/MocA family. As to quaternary structure, homotetramer.

It catalyses the reaction myo-inositol + NAD(+) = scyllo-inosose + NADH + H(+). Functionally, involved in the oxidation of myo-inositol (MI) to 2-keto-myo-inositol (2KMI or 2-inosose). The sequence is that of Inositol 2-dehydrogenase from Acidothermus cellulolyticus (strain ATCC 43068 / DSM 8971 / 11B).